The primary structure comprises 397 residues: MRLTLPRLNAAYIVGAARTPVGKFNGALKSVSAIDLGITAAKAAVQRSKVPADQIDEFLFGQVLTANSGQAPARQVVIKGGFPESVEATTINKVCSSGLKTVALAAQAIKAGDRNVIVAGGMESMSNTPYYSGRGLVFGNQKLEDSIVKDGLWDPYNNIHMGNCCENTNKRDGITREQQDEYAIESYRRANESIKNGAFKDEIVPVEIKTRKGTVTVSEDEEPKGANAEKLKGLKPVFDKQGSVTAGNASPINDGASAVVVASGTKAKELGTPVLAKIVSYADAATAPIDFTIAPSLAIPAALKKAGLTKDDIALWEINEAFSGVALANLMRLGIDKSKVNVKGGAVALGHPIGASGNRIFVTLVNALKEGEYGVAAICNGGGASTAIVIKKVSSVE.

Catalysis depends on C95, which acts as the Acyl-thioester intermediate. 2 residues coordinate CoA: Y187 and K230. Y187 lines the K(+) pocket. Residues A246, G247, and A249 each coordinate K(+). S250 contacts CoA. A K(+)-binding site is contributed by V347. Active-site proton acceptor residues include H351 and C379.

Belongs to the thiolase-like superfamily. Thiolase family.

Its subcellular location is the peroxisome. It catalyses the reaction 2 acetyl-CoA = acetoacetyl-CoA + CoA. Essential for n-decane utilization. The polypeptide is Acetyl-CoA acetyltransferase (PAT1) (Yarrowia lipolytica (strain CLIB 122 / E 150) (Yeast)).